We begin with the raw amino-acid sequence, 147 residues long: 3-dehydroquinate dehydratase (147 aa).

Residue Y23 is the Proton acceptor of the active site. The substrate site is built by N74, H80, and D87. H100 functions as the Proton donor in the catalytic mechanism. Residues 101–102 (IS) and R111 contribute to the substrate site.

It belongs to the type-II 3-dehydroquinase family. Homododecamer.

The catalysed reaction is 3-dehydroquinate = 3-dehydroshikimate + H2O. It participates in metabolic intermediate biosynthesis; chorismate biosynthesis; chorismate from D-erythrose 4-phosphate and phosphoenolpyruvate: step 3/7. Functionally, catalyzes a trans-dehydration via an enolate intermediate. The chain is 3-dehydroquinate dehydratase from Prochlorococcus marinus (strain MIT 9301).